The chain runs to 623 residues: Membrane protein insertase YidC (623 aa).

A helical membrane pass occupies residues 8 to 28 (LILATGLSFLVIMVWFFLFPP). Residues 33 to 64 (TEGEPTVATQQTAVAPSATPDAPTTAVPPDAD) are disordered. Low complexity predominate over residues 44 to 62 (TAVAPSATPDAPTTAVPPD). 4 consecutive transmembrane segments (helical) span residues 379–399 (MGLAIIALTFLLKALVLPLAY), 449–469 (LPILIQIPIFFSLYKVIFVTI), 507–527 (TTMALIFIGALPILLGVSMWL), and 543–563 (IFAWMPWVFMFMLGHFASGLV). The segment covering 601-617 (KPAAQPAGKAANDGAAP) has biased composition (low complexity). The interval 601–623 (KPAAQPAGKAANDGAAPAKKRKP) is disordered.

Belongs to the OXA1/ALB3/YidC family. Type 1 subfamily. As to quaternary structure, interacts with the Sec translocase complex via SecD. Specifically interacts with transmembrane segments of nascent integral membrane proteins during membrane integration.

Its subcellular location is the cell inner membrane. Its function is as follows. Required for the insertion and/or proper folding and/or complex formation of integral membrane proteins into the membrane. Involved in integration of membrane proteins that insert both dependently and independently of the Sec translocase complex, as well as at least some lipoproteins. Aids folding of multispanning membrane proteins. In Cereibacter sphaeroides (strain KD131 / KCTC 12085) (Rhodobacter sphaeroides), this protein is Membrane protein insertase YidC.